The primary structure comprises 335 residues: Fructose-1,6-bisphosphatase class 1 (335 aa).

4 residues coordinate Mg(2+): glutamate 92, aspartate 114, leucine 116, and aspartate 117. Substrate is bound by residues 117–120 (DGSS), asparagine 209, and lysine 275. Glutamate 281 provides a ligand contact to Mg(2+).

It belongs to the FBPase class 1 family. Homotetramer. The cofactor is Mg(2+).

Its subcellular location is the cytoplasm. It catalyses the reaction beta-D-fructose 1,6-bisphosphate + H2O = beta-D-fructose 6-phosphate + phosphate. The protein operates within carbohydrate biosynthesis; gluconeogenesis. The chain is Fructose-1,6-bisphosphatase class 1 from Verminephrobacter eiseniae (strain EF01-2).